We begin with the raw amino-acid sequence, 585 residues long: UvrABC system protein C (585 aa).

In terms of domain architecture, GIY-YIG spans 15 to 90 (AEPGVYQFLE…IKRHQPRYNV (76 aa)). The 36-residue stretch at 198–233 (GILADPLRQEMQAAATAEEFERAANIRDRLAVIESF) folds into the UVR domain.

Belongs to the UvrC family. In terms of assembly, interacts with UvrB in an incision complex.

The protein resides in the cytoplasm. Its function is as follows. The UvrABC repair system catalyzes the recognition and processing of DNA lesions. UvrC both incises the 5' and 3' sides of the lesion. The N-terminal half is responsible for the 3' incision and the C-terminal half is responsible for the 5' incision. This chain is UvrABC system protein C, found in Haloquadratum walsbyi (strain DSM 16790 / HBSQ001).